Reading from the N-terminus, the 1829-residue chain is Unconventional myosin-Va (1829 aa).

A Myosin N-terminal SH3-like domain is found at 8–60 (TKYARVWIPDPEEVWKSAELLKDYKPGDKVLQLRLEEGKDLEYCLDPKTKELP). The 696-residue stretch at 69-764 (VGENDLTALS…QVAYLEKIRA (696 aa)) folds into the Myosin motor domain. 163-170 (GESGAGKT) contacts ATP. A disordered region spans residues 599-635 (AISPTSATPSGRVPLSRTPVKPAKARPGQTSKEHKKT). The actin-binding stretch occupies residues 644–666 (LHLLMETLNATTPHYVRCIKPND). 6 IQ domains span residues 767–789 (LRAA…KYMR), 790–814 (MRRA…TFLR), 815–837 (RTRA…RYQC), 838–862 (MRDA…QMML), 863–887 (REHK…HRTL), and 888–915 (KAIV…EARS). Coiled coils occupy residues 916–1239 (VERY…PEVT) and 1315–1419 (GLKE…ELEV). 2 disordered regions span residues 1106-1148 (IPKP…SEKK) and 1170-1199 (KQSL…PIRG). Residues 1117-1131 (THSSNESEYTFSSEI) are compositionally biased toward polar residues. Composition is skewed to basic and acidic residues over residues 1137–1148 (LPLRMEEPSEKK) and 1170–1196 (KQSL…ERPP). A Dilute domain is found at 1508–1784 (TSTINGIKKV…IRTIQLRLRD (277 aa)). Thr-1734 carries the phosphothreonine modification.

The protein belongs to the TRAFAC class myosin-kinesin ATPase superfamily. Myosin family. May be a homodimer, which associates with multiple calmodulin or myosin light chains. As to expression, neuronal and non-neuronal cells of the brain.

It is found in the golgi apparatus membrane. The enzyme catalyses ATP + H2O = ADP + phosphate + H(+). Processive actin-based motor that can move in large steps approximating the 36-nm pseudo-repeat of the actin filament. Can hydrolyze ATP in the presence of actin, which is essential for its function as a motor protein. Involved in melanosome transport. Also mediates the transport of vesicles to the plasma membrane. May also be required for some polarization process involved in dendrite formation. The sequence is that of Unconventional myosin-Va (MYO5A) from Gallus gallus (Chicken).